We begin with the raw amino-acid sequence, 276 residues long: 2-dehydro-3-deoxyphosphooctonate aldolase (276 aa).

This sequence belongs to the KdsA family.

It localises to the cytoplasm. The enzyme catalyses D-arabinose 5-phosphate + phosphoenolpyruvate + H2O = 3-deoxy-alpha-D-manno-2-octulosonate-8-phosphate + phosphate. Its pathway is carbohydrate biosynthesis; 3-deoxy-D-manno-octulosonate biosynthesis; 3-deoxy-D-manno-octulosonate from D-ribulose 5-phosphate: step 2/3. The protein operates within bacterial outer membrane biogenesis; lipopolysaccharide biosynthesis. In Xylella fastidiosa (strain 9a5c), this protein is 2-dehydro-3-deoxyphosphooctonate aldolase.